The chain runs to 334 residues: Catabolite repressor/activator (334 aa).

The 58-residue stretch at 1-58 folds into the HTH lacI-type domain; the sequence is MKLDEIARLAGVSRTTASYVINGKAKQYRVSDKTVEKVMAVVREHNYHPNAVAAGLRA. The segment at residues 3 to 22 is a DNA-binding region (H-T-H motif); sequence LDEIARLAGVSRTTASYVIN.

Homotetramer.

Functionally, global transcriptional regulator, which plays an important role in the regulation of carbon metabolism. The sequence is that of Catabolite repressor/activator (cra) from Salmonella typhimurium (strain LT2 / SGSC1412 / ATCC 700720).